Reading from the N-terminus, the 164-residue chain is 6,7-dimethyl-8-ribityllumazine synthase (164 aa).

5-amino-6-(D-ribitylamino)uracil is bound by residues Tyr-27, 58–60 (ALE), and 87–89 (CVI). A (2S)-2-hydroxy-3-oxobutyl phosphate-binding site is contributed by 92-93 (ET). His-95 (proton donor) is an active-site residue. Asn-120 is a 5-amino-6-(D-ribitylamino)uracil binding site. A (2S)-2-hydroxy-3-oxobutyl phosphate-binding site is contributed by Arg-134.

This sequence belongs to the DMRL synthase family.

The catalysed reaction is (2S)-2-hydroxy-3-oxobutyl phosphate + 5-amino-6-(D-ribitylamino)uracil = 6,7-dimethyl-8-(1-D-ribityl)lumazine + phosphate + 2 H2O + H(+). It functions in the pathway cofactor biosynthesis; riboflavin biosynthesis; riboflavin from 2-hydroxy-3-oxobutyl phosphate and 5-amino-6-(D-ribitylamino)uracil: step 1/2. Catalyzes the formation of 6,7-dimethyl-8-ribityllumazine by condensation of 5-amino-6-(D-ribitylamino)uracil with 3,4-dihydroxy-2-butanone 4-phosphate. This is the penultimate step in the biosynthesis of riboflavin. The protein is 6,7-dimethyl-8-ribityllumazine synthase of Methylocella silvestris (strain DSM 15510 / CIP 108128 / LMG 27833 / NCIMB 13906 / BL2).